A 307-amino-acid polypeptide reads, in one-letter code: Vesicle-trafficking protein SEC22a (307 aa).

Serine 2 is subject to N-acetylserine. At 2 to 187 (SMILSASVIR…ISSAHQRLEP (186 aa)) the chain is on the cytoplasmic side. Serine 6 and serine 8 each carry phosphoserine. Residues 8 to 119 (SVIRVRDGLP…YCFIEFDNFI (112 aa)) form the Longin domain. The chain crosses the membrane as a helical span at residues 188 to 208 (ATLSGIVGFILSLLCGALNLI). The Lumenal segment spans residues 209-226 (RGFHAIESLLQSDGDDFN). A helical membrane pass occupies residues 227–247 (YIIAFFLGTAACLYQCYLLVY). Residues 248 to 253 (YTGWRN) lie on the Cytoplasmic side of the membrane. Residues 254–271 (VKSFLTFGLICLCNMYLY) form a helical membrane-spanning segment. The Lumenal segment spans residues 272–274 (ELR). A helical membrane pass occupies residues 275–295 (NLWQLFFHVTVGAFVTLQIWL). Topologically, residues 296 to 307 (RQAQGKAPDYDV) are cytoplasmic.

Belongs to the synaptobrevin family.

It localises to the endoplasmic reticulum membrane. May be involved in vesicle transport between the ER and the Golgi complex. In Macaca fascicularis (Crab-eating macaque), this protein is Vesicle-trafficking protein SEC22a (SEC22A).